Here is a 173-residue protein sequence, read N- to C-terminus: Large ribosomal subunit protein uL16 (173 aa).

This sequence belongs to the universal ribosomal protein uL16 family.

This is Large ribosomal subunit protein uL16 from Methanosarcina acetivorans (strain ATCC 35395 / DSM 2834 / JCM 12185 / C2A).